Here is a 145-residue protein sequence, read N- to C-terminus: Large ribosomal subunit protein uL13 (145 aa).

Belongs to the universal ribosomal protein uL13 family. Part of the 50S ribosomal subunit.

This protein is one of the early assembly proteins of the 50S ribosomal subunit, although it is not seen to bind rRNA by itself. It is important during the early stages of 50S assembly. In Brevibacillus brevis (strain 47 / JCM 6285 / NBRC 100599), this protein is Large ribosomal subunit protein uL13.